Reading from the N-terminus, the 459-residue chain is V-type ATP synthase beta chain (459 aa).

It belongs to the ATPase alpha/beta chains family.

Produces ATP from ADP in the presence of a proton gradient across the membrane. The V-type beta chain is a regulatory subunit. This chain is V-type ATP synthase beta chain, found in Thermoanaerobacter sp. (strain X514).